Here is a 421-residue protein sequence, read N- to C-terminus: MDLEAKVKKMGLGHEQGFGAPCLKCKEKCEGFELHFWRKICRNCKCGQEEHDVLLSNEEDRKVGKLFEDTKYTTLIAKLKTDGIPMYKRNVMILTNPVAAKKNVSINTVTYEWAPPVQNQALARQYMQMLPKEKQPVAGSEGAQYRKKQLAKQLPAHDQDPSKCHELSPKEVKEMEQFVKKYKSEALGVGDVKLPREMDTQGPNRMLLPGGDRSTTAAVGAMEGKSAEPKRTQYSCYCCKLSMKEGDPAIYAERAGYDKLWHPACFVCSACQELLVDMIYFWKNGKLYCGRHYCDSEKPRCAGCDELIFSNEYTQAENQNWHLKHFCCFDCDNILAGEIYVMVNDKPVCKPCYVKNHAVVCQGCHNAIDPEVQRVTYNNFSWHASTECFLCSCCSKCLIGQKFMPVEGMVFCSVECKKMMS.

The PET domain maps to 92-199; that stretch reads MILTNPVAAK…GDVKLPREMD (108 aa). The interval 133 to 164 is disordered; the sequence is EKQPVAGSEGAQYRKKQLAKQLPAHDQDPSKC. The segment covering 155–164 has biased composition (basic and acidic residues); it reads PAHDQDPSKC. LIM zinc-binding domains are found at residues 234–297, 299–359, and 362–421; these read YSCY…CDSE, PRCA…NHAV, and QGCH…KMMS.

This sequence belongs to the prickle / espinas / testin family. In terms of assembly, interacts via LIM domain 1 with ZYX. Interacts (via LIM domain 3) with ENAH and VASP. Interacts with ALKBH4, talin, actin, alpha-actinin, GRIP1 and PXN. Interacts (via LIM domain 2) with ACTL7A (via N-terminus). Heterodimer with ACTL7A; the heterodimer interacts with ENAH to form a heterotrimer.

The protein localises to the cytoplasm. It localises to the cell junction. Its subcellular location is the focal adhesion. Its function is as follows. Scaffold protein that may play a role in cell adhesion, cell spreading and in the reorganization of the actin cytoskeleton. Plays a role in the regulation of cell proliferation. May act as a tumor suppressor. This is Testin (TES) from Neofelis nebulosa (Clouded leopard).